The chain runs to 26 residues: Orexigenic neuropeptide 26RFa (26 aa).

Phenylalanine 26 is modified (phenylalanine amide).

In terms of tissue distribution, brain.

Its subcellular location is the secreted. In terms of biological role, may have orexigenic activity. May promote aldosterone secretion by the adrenal gland. This Pelophylax lessonae (Pool frog) protein is Orexigenic neuropeptide 26RFa.